We begin with the raw amino-acid sequence, 250 residues long: Complement factor B-like protease (250 aa).

Sushi domains are found at residues 3–73 (TRCD…KCRA), 74–133 (VWCP…VCDD), and 136–193 (GDCP…QCRA). Disulfide bonds link Cys-5–Cys-44, Cys-30–Cys-71, Cys-76–Cys-118, Cys-104–Cys-131, Cys-138–Cys-178, and Cys-164–Cys-191. Residue Asn-115 is glycosylated (N-linked (GlcNAc...) asparagine). N-linked (GlcNAc...) asparagine glycosylation occurs at Asn-221.

This sequence belongs to the peptidase S1 family. In terms of tissue distribution, plasma.

The protein resides in the secreted. Its function is as follows. Required in both the classical and alternate pathways of the complement system. In Gallus gallus (Chicken), this protein is Complement factor B-like protease.